Here is a 284-residue protein sequence, read N- to C-terminus: MPKILCLHGYGTSASILQHQLGPFMAAADPSYEFVFLEGEIECQKAQGLGPFVKGPFLCYNESFAPADIQESCDLIDEMIQAAGPFDGIIGFSQGGSVALSYLLQRQIDGHPPPFRWAVFFSTVIAFAPNDTFGSNILANLTDHEIRLLDGYPATDLSSLHPLTRALCETTAQTFYSAKTGGFISPNTPIAEFSKRDDPSQPRVFHPALLGDRIPIPTVHITGRKDNSLMVGLSVLVQGLCDQRLIRSLTHSGGHNVPRSADDVRAAWAAVDWAIQHSQKQHIW.

Active-site charge relay system residues include serine 93, aspartate 226, and histidine 255.

The protein belongs to the LovG family.

It functions in the pathway polyketide biosynthesis. Esterase; part of the gene cluster that mediates the biosynthesis of asperlin, a polyketide showing anti-inflammatory, antitumor and antibiotic activities. The first step of the asperlin biosynthesis is the production of the intermediate 2,4,6-octatrienoic acid by the highly redusing polyketide synthase alnA with cleavage of the PKS product by the esterase alnB. 2,4,6-octatrienoic acid is further converted to asperlin via several steps involving the remaining enzymes from the cluster. In Emericella nidulans (strain FGSC A4 / ATCC 38163 / CBS 112.46 / NRRL 194 / M139) (Aspergillus nidulans), this protein is Esterase alnB.